The sequence spans 1642 residues: Cholesterol transporter ABCA5 (1642 aa).

The chain crosses the membrane as a helical span at residues S32–M52. The N-linked (GlcNAc...) asparagine glycan is linked to N86. 6 helical membrane-spanning segments follow: residues V220 to I240, L264 to I284, I297 to L317, G328 to I348, L355 to M375, and L396 to Y416. N-linked (GlcNAc...) asparagine glycosylation is present at N458. In terms of domain architecture, ABC transporter 1 spans I478–Y713. Residue G514–S521 participates in ATP binding. 2 consecutive transmembrane segments (helical) span residues L866–F886 and V967–I987. N-linked (GlcNAc...) asparagine glycosylation is present at N996. Transmembrane regions (helical) follow at residues L1021–M1041, V1071–F1091, F1102–I1122, F1139–G1159, A1169–I1189, and L1207–Y1227. The interval K1249 to V1268 is disordered. Residues P1259–V1268 are compositionally biased toward acidic residues. Residues I1290 to K1533 form the ABC transporter 2 domain. Position 1333-1340 (G1333–S1340) interacts with ATP.

The protein belongs to the ABC transporter superfamily. ABCA family. Post-translationally, N-glycosylated. In terms of tissue distribution, ubiquitously expressed. Highly expressed in testis, skeletal muscle, kidney, liver and placenta. Expressed in both the epithelial and mesenchymal compartments, present within the outer root sheath (ORS) of the hair follicle as well as dermal sheath. Expressed in multiple regions of the brain, including the hippocampus, superior frontal and inferior temporal cortices. Strongly expressed in neurons and moderately in microglia, with only weak expression in astrocytes and oligodendrocytes.

The protein localises to the golgi apparatus membrane. It is found in the lysosome membrane. Its subcellular location is the late endosome membrane. The protein resides in the cell membrane. The enzyme catalyses cholesterol(in) + ATP + H2O = cholesterol(out) + ADP + phosphate + H(+). Its function is as follows. Cholesterol efflux transporter in macrophages that is responsible for APOAI/high-density lipoproteins (HDL) formation at the plasma membrane under high cholesterol levels and participates in reverse cholesterol transport. May play a role in the processing of autolysosomes. This chain is Cholesterol transporter ABCA5, found in Homo sapiens (Human).